A 237-amino-acid chain; its full sequence is Ribosomal RNA small subunit methyltransferase G (237 aa).

Residues glycine 78, phenylalanine 83, 129–130 (AE), and arginine 148 contribute to the S-adenosyl-L-methionine site.

This sequence belongs to the methyltransferase superfamily. RNA methyltransferase RsmG family.

It localises to the cytoplasm. Specifically methylates the N7 position of a guanine in 16S rRNA. This Streptococcus pyogenes serotype M49 (strain NZ131) protein is Ribosomal RNA small subunit methyltransferase G.